Consider the following 160-residue polypeptide: Class B acid phosphatase (160 aa).

An N-terminal signal peptide occupies residues 1–23 (MRKVTLTLSAIALALSLNGAAMA). The active-site Nucleophile is aspartate 69. Residues aspartate 69 and aspartate 71 each coordinate Mg(2+). Aspartate 71 serves as the catalytic Proton donor. 137–138 (TG) lines the substrate pocket.

The protein belongs to the class B bacterial acid phosphatase family. Homotetramer. Requires Mg(2+) as cofactor.

The protein resides in the periplasm. The catalysed reaction is a phosphate monoester + H2O = an alcohol + phosphate. Functionally, dephosphorylates several organic phosphate monoesters. Also has a phosphotransferase activity catalyzing the transfer of low-energy phosphate groups from organic phosphate monoesters to free hydroxyl groups of various organic compounds. The protein is Class B acid phosphatase (aphA) of Proteus mirabilis.